A 650-amino-acid polypeptide reads, in one-letter code: Putative pumilio homolog 7, chloroplastic (650 aa).

2 disordered regions span residues 1–22 (MDEF…RTPL) and 200–235 (NDDK…GQEI). A chloroplast-targeting transit peptide spans 1-77 (MDEFREASSV…SPPFNGIIPK (77 aa)). Low complexity-rich tracts occupy residues 8–22 (SSVS…RTPL) and 217–232 (PSYS…YNNG). In terms of domain architecture, PUM-HD spans 308 to 650 (SNTRALMSNN…RIFSRNLLKK (343 aa)). Pumilio repeat units follow at residues 333-368 (DIQG…IIFN), 369-404 (EVIA…QIVL), 408-443 (EEPG…SLVK), 445-480 (ALRP…FIFD), 481-516 (AATK…KLIA), 517-552 (EISR…MMLA), 553-591 (QLKG…ELVS), and 594-625 (HFDQ…SLVE).

Its subcellular location is the plastid. The protein localises to the chloroplast. It localises to the cytoplasm. Functionally, sequence-specific RNA-binding protein that regulates translation and mRNA stability by binding the 3'-UTR of target mRNAs. This chain is Putative pumilio homolog 7, chloroplastic (APUM7), found in Arabidopsis thaliana (Mouse-ear cress).